We begin with the raw amino-acid sequence, 354 residues long: Uroporphyrinogen decarboxylase (354 aa).

Residues 27 to 31, D77, Y154, T209, and H327 each bind substrate; that span reads RQAGR.

Belongs to the uroporphyrinogen decarboxylase family. In terms of assembly, homodimer.

It is found in the cytoplasm. It carries out the reaction uroporphyrinogen III + 4 H(+) = coproporphyrinogen III + 4 CO2. It participates in porphyrin-containing compound metabolism; protoporphyrin-IX biosynthesis; coproporphyrinogen-III from 5-aminolevulinate: step 4/4. Its function is as follows. Catalyzes the decarboxylation of four acetate groups of uroporphyrinogen-III to yield coproporphyrinogen-III. This chain is Uroporphyrinogen decarboxylase, found in Mannheimia succiniciproducens (strain KCTC 0769BP / MBEL55E).